The chain runs to 201 residues: Inner membrane protein YnbA (201 aa).

The Periplasmic segment spans residues 1 to 43 (MTLYQIKPLFQSLLRPTMFWLYKHHVTANHITLAALALSLLTG). The chain crosses the membrane as a helical span at residues 44-64 (LLLMLAAQPILFLLLPIVLFI). Over 65–84 (RMALNALDGMLARECNQQTR) the chain is Cytoplasmic. A helical transmembrane segment spans residues 85 to 107 (LGAILNETGDVISDIALYLPFLF). At 108 to 116 (LPESNASLV) the chain is on the periplasmic side. The helical transmembrane segment at 117 to 139 (ILMLFCTILTEFCGLLAQTINGV) threads the bilayer. Residues 140 to 151 (RSYAGPFGKSDR) lie on the Cytoplasmic side of the membrane. Residues 152–172 (ALIFGLWGLAVAIYPQWMQWN) form a helical membrane-spanning segment. The Periplasmic portion of the chain corresponds to 173–175 (NLL). The chain crosses the membrane as a helical span at residues 176-196 (WSIASILLLWTAINRCRSVLL). Residues 197 to 201 (MSAEI) lie on the Cytoplasmic side of the membrane.

It localises to the cell inner membrane. This Escherichia coli (strain K12) protein is Inner membrane protein YnbA (ynbA).